Consider the following 354-residue polypeptide: Methionine import ATP-binding protein MetN (354 aa).

An ABC transporter domain is found at 8 to 250 (LDHIDITFRQ…PKEALTQKFI (243 aa)). 42 to 49 (GYSGAGKS) contacts ATP.

It belongs to the ABC transporter superfamily. Methionine importer (TC 3.A.1.24) family. The complex is composed of two ATP-binding proteins (MetN), two transmembrane proteins (MetI) and a solute-binding protein (MetQ).

The protein resides in the cell membrane. It catalyses the reaction L-methionine(out) + ATP + H2O = L-methionine(in) + ADP + phosphate + H(+). The enzyme catalyses D-methionine(out) + ATP + H2O = D-methionine(in) + ADP + phosphate + H(+). Functionally, part of the ABC transporter complex MetNIQ involved in methionine import. Responsible for energy coupling to the transport system. This is Methionine import ATP-binding protein MetN from Streptococcus pyogenes serotype M6 (strain ATCC BAA-946 / MGAS10394).